A 200-amino-acid polypeptide reads, in one-letter code: Probable GTP-binding protein EngB (200 aa).

Positions 22 to 194 (TLPEVAFVGR…WKEVLRLTLA (173 aa)) constitute an EngB-type G domain. GTP is bound by residues 30–37 (GRSNVGKS), 57–61 (GRTQL), 75–78 (DLPG), 142–145 (TKCD), and 173–175 (FSA). 2 residues coordinate Mg(2+): S37 and T59.

This sequence belongs to the TRAFAC class TrmE-Era-EngA-EngB-Septin-like GTPase superfamily. EngB GTPase family. Mg(2+) serves as cofactor.

Necessary for normal cell division and for the maintenance of normal septation. In Pelobacter propionicus (strain DSM 2379 / NBRC 103807 / OttBd1), this protein is Probable GTP-binding protein EngB.